Here is a 550-residue protein sequence, read N- to C-terminus: Membrane-bound alkaline phosphatase (550 aa).

The first 39 residues, 1–39 (MSTWWLVVVAAAAAAGLVRAEDRYHPERLAAGEASAATR), serve as a signal peptide directing secretion. Asp-83 is a binding site for Mg(2+). Residue Asp-83 coordinates Zn(2+). Residue Ser-133 is the Phosphoserine intermediate of the active site. 3 residues coordinate Mg(2+): His-196, Ser-198, and Glu-356. 5 residues coordinate Zn(2+): Asp-361, His-365, Asp-402, His-403, and His-479. Ser-524 carries GPI-anchor amidated serine lipidation. The propeptide at 525–550 (AATVPTAALLSLLLAAFITLRHQCFL) is removed in mature form.

Belongs to the alkaline phosphatase family. Mg(2+) is required as a cofactor. Zn(2+) serves as cofactor. As to expression, midgut.

The protein localises to the cell membrane. It carries out the reaction a phosphate monoester + H2O = an alcohol + phosphate. The polypeptide is Membrane-bound alkaline phosphatase (Alp-m) (Bombyx mori (Silk moth)).